The sequence spans 656 residues: Protein terminal ear1 (656 aa).

In terms of domain architecture, RRM spans 211 to 283; that stretch reads SLVVLSPLPG…RRLVVEFTRP (73 aa). Disordered stretches follow at residues 280–408 and 576–656; these read FTRP…WKGR and LTDP…GYDD. Basic residues predominate over residues 288–299; that stretch reads PRRRGYAPHQHR. Positions 314–331 are enriched in low complexity; sequence PSQPTSSQPPASSSSSGS. Polar residues predominate over residues 346-358; it reads CKSSAGSDQSSKG. Composition is skewed to low complexity over residues 377–397, 585–601, and 612–630; these read AAAAASSSTPTASGKQTQKGV, RSPAASSASSPPKSRAA, and PAPSSSADGASSTTTSTHA. A compositionally biased stretch (basic and acidic residues) spans 642 to 656; it reads DIRLAGELRRLGYDD.

Expressed below the shoot tip down the flanks of shoot apex in an alternating pattern. Not expressed in root tips, leaves or immature ears (female inflorescences).

Probable RNA-binding protein. Involved in the regulation of leaf initiation rate and shoot development. Seems to act more predominantly in the early stages of the leaf development, rather than in the later phase. The sequence is that of Protein terminal ear1 (TE1) from Zea mays (Maize).